Here is a 147-residue protein sequence, read N- to C-terminus: SPI-1 type 3 secretion system pilotin (147 aa).

Residues 1–15 (MKKFYSCLPVFLLIG) form the signal peptide. A lipid anchor (N-palmitoyl cysteine) is attached at cysteine 16. Cysteine 16 is lipidated: S-diacylglycerol cysteine.

This sequence belongs to the InvH family.

The protein localises to the cell outer membrane. Involved in the synthesis of the type III secretion system (T3SS), also called injectisome, which is used to inject bacterial effector proteins into eukaryotic host cells. Pilot protein that is required for the proper localization of the secretin InvG/SctC in the outer membrane. Necessary for efficient adherence and entry of these organisms into cultured epithelial cells. In Salmonella choleraesuis (strain SC-B67), this protein is SPI-1 type 3 secretion system pilotin.